Here is a 96-residue protein sequence, read N- to C-terminus: Beta-defensin 20 (96 aa).

The N-terminal stretch at 1-21 (MKLLQVLLVLLFVALADGAQP) is a signal peptide. 3 disulfide bridges follow: cysteine 24–cysteine 52, cysteine 32–cysteine 46, and cysteine 36–cysteine 53.

It belongs to the beta-defensin family.

It localises to the secreted. Its function is as follows. Has antibacterial activity. The sequence is that of Beta-defensin 20 (Defb20) from Mus musculus (Mouse).